A 483-amino-acid chain; its full sequence is Protein FIZZY-RELATED 2 (483 aa).

The segment at 1–28 (MEEEDPTASNVITNSNSSSMRNLSPAMN) is disordered. Residues 7-28 (TASNVITNSNSSSMRNLSPAMN) are compositionally biased toward polar residues. 7 WD repeats span residues 174-211 (QDDF…VTKL), 215-254 (GAED…RTRT), 257-294 (GHRL…DHVS), 298-337 (GHKS…PVLK), 340-382 (EHTA…HLSS), 384-425 (DTCS…KIAT), and 428-467 (GHTY…KSQN).

This sequence belongs to the WD repeat CDC20/Fizzy family. As to quaternary structure, associates with the APC/C complex. Interacts with CDC20-1, CDC20-2, CYCA1-1, CYCA1-2, CYCA3-4, CYCB1-1 and CYCB1-2. Binds to GIG1 and PYM. In terms of tissue distribution, expressed in seedlings, flowers, leaves and roots. Expressed in the differentiating cell files of the root elongation zone.

The protein resides in the nucleus. It functions in the pathway protein modification; protein ubiquitination. Functionally, activator protein that regulates the ubiquitin ligase activity and substrate specificity of the anaphase promoting complex/cyclosome (APC/C). Necessary and sufficient for endoreduplication and correct cell expansion. Controls meristem size by stimulating endoreduplication in the elongation zone. This is Protein FIZZY-RELATED 2 (FZR2) from Arabidopsis thaliana (Mouse-ear cress).